We begin with the raw amino-acid sequence, 544 residues long: Chaperonin GroEL 1 (544 aa).

ATP is bound by residues 29 to 32, 86 to 90, G413, 479 to 481, and D495; these read TLGP, DGTTT, and NAA.

The protein belongs to the chaperonin (HSP60) family. In terms of assembly, forms a cylinder of 14 subunits composed of two heptameric rings stacked back-to-back. Interacts with the co-chaperonin GroES.

Its subcellular location is the cytoplasm. It catalyses the reaction ATP + H2O + a folded polypeptide = ADP + phosphate + an unfolded polypeptide.. Functionally, together with its co-chaperonin GroES, plays an essential role in assisting protein folding. The GroEL-GroES system forms a nano-cage that allows encapsulation of the non-native substrate proteins and provides a physical environment optimized to promote and accelerate protein folding. The chain is Chaperonin GroEL 1 from Trichormus variabilis (strain ATCC 29413 / PCC 7937) (Anabaena variabilis).